A 461-amino-acid polypeptide reads, in one-letter code: Tumor necrosis factor receptor superfamily member 1A (461 aa).

An N-terminal signal peptide occupies residues 1 to 29 (MGLPIVPGLLLSLVLLALLMGIHPSGVTG). At 30-211 (LVPSLGDREK…VTNPQDSGTA (182 aa)) the chain is on the extracellular side. TNFR-Cys repeat units lie at residues 43 to 82 (LCPQ…TVCE), 83 to 125 (VCDK…DTVC), 126 to 166 (GCKK…NTVC), and 167 to 196 (NCHA…KLCL). 12 cysteine pairs are disulfide-bonded: Cys44–Cys58, Cys59–Cys72, Cys62–Cys81, Cys84–Cys99, Cys102–Cys117, Cys105–Cys125, Cys127–Cys143, Cys146–Cys158, Cys149–Cys166, Cys168–Cys179, Cys182–Cys195, and Cys185–Cys191. A glycan (N-linked (GlcNAc...) asparagine) is linked at Asn54. Asn151 carries an N-linked (GlcNAc...) asparagine glycan. Asn201 carries an N-linked (GlcNAc...) asparagine glycan. A helical membrane pass occupies residues 212-234 (VLLPLVIFLGLCLLFFICISLLC). The Cytoplasmic segment spans residues 235–461 (RYPQWRPRVY…AHSSTTHLPR (227 aa)). The tract at residues 344–354 (VRKWEDVVAAQ) is N-SMase activation domain (NSD). Positions 363-448 (PAMLYAVVDG…GCLENIRETL (86 aa)) constitute a Death domain.

Binding of TNF to the extracellular domain leads to homotrimerization. The aggregated death domains provide a novel molecular interface that interacts specifically with the death domain of TRADD. Various TRADD-interacting proteins such as TRAFS, RIPK1 and possibly FADD, are recruited to the complex by their association with TRADD. This complex activates at least two distinct signaling cascades, apoptosis and NF-kappa-B signaling. Interacts with BAG4, BABAM2, FEM1B, GRB2, SQSTM1 and TRPC4AP. Interacts with DAB2IP. Interacts directly with NOL3 (via CARD domain); inhibits TNF-signaling pathway. Interacts with SH3RF2, TRADD and RIPK1. SH3RF2 facilitates the recruitment of RIPK1 and TRADD to TNFRSF1A in a TNF-alpha-dependent process. Interacts with PGLYRP1; this interaction is important for cell death induction. Interacts (via death domain) with MADD (via death domain).

The protein resides in the cell membrane. It is found in the golgi apparatus membrane. In terms of biological role, receptor for TNFSF2/TNF-alpha and homotrimeric TNFSF1/lymphotoxin-alpha. The adapter molecule FADD recruits caspase-8 to the activated receptor. The resulting death-inducing signaling complex (DISC) performs caspase-8 proteolytic activation which initiates the subsequent cascade of caspases (aspartate-specific cysteine proteases) mediating apoptosis. This is Tumor necrosis factor receptor superfamily member 1A (Tnfrsf1a) from Rattus norvegicus (Rat).